We begin with the raw amino-acid sequence, 251 residues long: tRNA (guanine-N(1)-)-methyltransferase (251 aa).

S-adenosyl-L-methionine-binding positions include Gly114 and 134-139; that span reads IGDYVL.

Belongs to the RNA methyltransferase TrmD family. In terms of assembly, homodimer.

It is found in the cytoplasm. The enzyme catalyses guanosine(37) in tRNA + S-adenosyl-L-methionine = N(1)-methylguanosine(37) in tRNA + S-adenosyl-L-homocysteine + H(+). Its function is as follows. Specifically methylates guanosine-37 in various tRNAs. The chain is tRNA (guanine-N(1)-)-methyltransferase from Pelotomaculum thermopropionicum (strain DSM 13744 / JCM 10971 / SI).